A 320-amino-acid chain; its full sequence is Mitochondrial thiamine pyrophosphate carrier 1 (320 aa).

3 Solcar repeats span residues 12–110, 119–205, and 213–308; these read GTRR…TTQA, PQPV…LRPS, and PFGS…TLRA. Transmembrane regions (helical) follow at residues 17–35, 91–107, 125–145, 180–197, 219–239, and 283–300; these read VVLA…VAPL, LMYV…YRTT, FVAG…LDLL, GCSA…LFFA, ALAG…LDLV, and GLTV…VTMW.

Belongs to the mitochondrial carrier (TC 2.A.29) family.

It is found in the mitochondrion inner membrane. Mitochondrial transporter that mediates uptake of thiamine pyrophosphate (ThPP) into mitochondria. This Aspergillus terreus (strain NIH 2624 / FGSC A1156) protein is Mitochondrial thiamine pyrophosphate carrier 1 (tpc1).